A 259-amino-acid chain; its full sequence is Phosphatidylglycerol--prolipoprotein diacylglyceryl transferase (259 aa).

Helical transmembrane passes span 10–30 (IGLLEIRWYSLAYIIGILFAY), 50–70 (IISWWVTGMILGGRIGYILFY), 86–106 (WKGGMSFHGASLGLFCTMYIF), and 112–132 (IKFLSAIDLCLCAVPVGIFLG). Residue Arg-133 coordinates a 1,2-diacyl-sn-glycero-3-phospho-(1'-sn-glycerol). 3 consecutive transmembrane segments (helical) span residues 169–189 (LYEAFFEGLLLFVVMNLLFFF), 197–217 (GMLFSIFMIWYGIVRFFIEFV), and 227–247 (ILFNWITMGQLLSFIMVILGI).

The protein belongs to the Lgt family.

The protein resides in the cell inner membrane. It carries out the reaction L-cysteinyl-[prolipoprotein] + a 1,2-diacyl-sn-glycero-3-phospho-(1'-sn-glycerol) = an S-1,2-diacyl-sn-glyceryl-L-cysteinyl-[prolipoprotein] + sn-glycerol 1-phosphate + H(+). It participates in protein modification; lipoprotein biosynthesis (diacylglyceryl transfer). Catalyzes the transfer of the diacylglyceryl group from phosphatidylglycerol to the sulfhydryl group of the N-terminal cysteine of a prolipoprotein, the first step in the formation of mature lipoproteins. The polypeptide is Phosphatidylglycerol--prolipoprotein diacylglyceryl transferase (Ehrlichia ruminantium (strain Welgevonden)).